The chain runs to 399 residues: Transcription factor UNE10 (399 aa).

Disordered regions lie at residues 119–158 (QSKPGGVGSTRVGSCSDGRTMGGGKRARVAPEWSGGGSQR) and 173–228 (MGSH…RRDK). The segment covering 178–201 (NTIDDHDSVCHSRPQMEDEEEKKA) has biased composition (basic and acidic residues). One can recognise a bHLH domain in the interval 213-262 (RAAAIHNQSERKRRDKINQRMKTLQKLVPNSSKTDKASMLDEVIEYLKQL).

Homodimer. Associates to PTAC12/HMR/PAP5 which acts as a transcriptional coactivator. Interacts with the Pfr form of phyB but barely with that of phyA. Binds to COP1. Ubiquitinated and subsequently targeted to protein degradation by COP1 in the dark, but not in far-red light. Mainly expressed in stems, leaves, seedlings, fruits and flowers, and, to a lower extent, in roots.

The protein resides in the nucleus. Its activity is regulated as follows. Stabilized by phyA but destabilized by phyB. Accumulates in the dark but not in far-red light upon MG132 treatment, a 26S proteasome inhibitor (at protein level). Its function is as follows. Transcription factor binding to G-box elements (5'-CACGTG-3') in target genes promoters, particularly in far-red light but barely in the dark. Required during the fertilization of ovules by pollen. Repressor of phytochrome A-mediated far-red light responses including seed germination, suppression of hypocotyl elongation, and randomization of hypocotyl growth orientation. Does not inhibit phyB-induced red light responses. The polypeptide is Transcription factor UNE10 (Arabidopsis thaliana (Mouse-ear cress)).